We begin with the raw amino-acid sequence, 255 residues long: tRNA (guanine-N(7)-)-methyltransferase (255 aa).

The disordered stretch occupies residues 1–29; that stretch reads MSDSDASRPSAIASDGPDAAGKHASGAPW. S-adenosyl-L-methionine-binding residues include Glu-86, Glu-111, Asp-138, and Asp-160. Residue Asp-160 is part of the active site. Substrate contacts are provided by residues Lys-164, Asp-196, and 233-236; that span reads TRYE.

It belongs to the class I-like SAM-binding methyltransferase superfamily. TrmB family.

The catalysed reaction is guanosine(46) in tRNA + S-adenosyl-L-methionine = N(7)-methylguanosine(46) in tRNA + S-adenosyl-L-homocysteine. It functions in the pathway tRNA modification; N(7)-methylguanine-tRNA biosynthesis. Catalyzes the formation of N(7)-methylguanine at position 46 (m7G46) in tRNA. This is tRNA (guanine-N(7)-)-methyltransferase from Ruegeria sp. (strain TM1040) (Silicibacter sp.).